The chain runs to 447 residues: Rab GDP dissociation inhibitor alpha (447 aa).

Belongs to the Rab GDI family. As to quaternary structure, interacts with RHOH. Interacts with the non-phosphorylated forms of RAB1A, RAB3A, RAB5A, RAB5B, RAB5C, RAB8A, RAB8B, RAB10, RAB12, RAB35, and RAB43.

The protein resides in the cytoplasm. The protein localises to the golgi apparatus. Its subcellular location is the trans-Golgi network. Its function is as follows. Regulates the GDP/GTP exchange reaction of most Rab proteins by inhibiting the dissociation of GDP from them, and the subsequent binding of GTP to them. Promotes the dissociation of GDP-bound Rab proteins from the membrane and inhibits their activation. Promotes the dissociation of RAB1A, RAB3A, RAB5A and RAB10 from membranes. This Macaca fascicularis (Crab-eating macaque) protein is Rab GDP dissociation inhibitor alpha (GDI1).